A 352-amino-acid chain; its full sequence is Phosphoribosylformylglycinamidine cyclo-ligase (352 aa).

Belongs to the AIR synthase family.

The protein localises to the cytoplasm. The catalysed reaction is 2-formamido-N(1)-(5-O-phospho-beta-D-ribosyl)acetamidine + ATP = 5-amino-1-(5-phospho-beta-D-ribosyl)imidazole + ADP + phosphate + H(+). It participates in purine metabolism; IMP biosynthesis via de novo pathway; 5-amino-1-(5-phospho-D-ribosyl)imidazole from N(2)-formyl-N(1)-(5-phospho-D-ribosyl)glycinamide: step 2/2. The protein is Phosphoribosylformylglycinamidine cyclo-ligase of Stenotrophomonas maltophilia (strain K279a).